The primary structure comprises 330 residues: Trans-1,2-dihydrobenzene-1,2-diol dehydrogenase (330 aa).

The protein belongs to the Gfo/Idh/MocA family. As to quaternary structure, homodimer.

The catalysed reaction is (1R,2R)-1,2-dihydrobenzene-1,2-diol + NADP(+) = catechol + NADPH + H(+). The enzyme catalyses D-xylose + NADP(+) = D-xylono-1,5-lactone + NADPH + H(+). The polypeptide is Trans-1,2-dihydrobenzene-1,2-diol dehydrogenase (dhdh) (Xenopus laevis (African clawed frog)).